A 552-amino-acid chain; its full sequence is Hydroxylamine reductase (552 aa).

4 residues coordinate [4Fe-4S] cluster: Cys-3, Cys-6, Cys-15, and Cys-21. Hybrid [4Fe-2O-2S] cluster contacts are provided by His-247, Glu-271, Cys-315, Cys-407, Cys-435, Cys-460, Glu-495, and Lys-497. Cys-407 carries the post-translational modification Cysteine persulfide.

This sequence belongs to the HCP family. Requires [4Fe-4S] cluster as cofactor. It depends on hybrid [4Fe-2O-2S] cluster as a cofactor.

It localises to the cytoplasm. It catalyses the reaction A + NH4(+) + H2O = hydroxylamine + AH2 + H(+). Its function is as follows. Catalyzes the reduction of hydroxylamine to form NH(3) and H(2)O. This chain is Hydroxylamine reductase, found in Thermosipho melanesiensis (strain DSM 12029 / CIP 104789 / BI429).